We begin with the raw amino-acid sequence, 299 residues long: Probable alpha-L-glutamate ligase (299 aa).

Positions 104–287 (LQLLAREGIE…VSGKIIEFLE (184 aa)) constitute an ATP-grasp domain. Residues Lys-141, 178–179 (EF), Asp-187, and 211–213 (RSN) contribute to the ATP site. Mg(2+) is bound by residues Asp-248, Glu-260, and Asn-262. Mn(2+)-binding residues include Asp-248, Glu-260, and Asn-262.

Belongs to the RimK family. The cofactor is Mg(2+). Mn(2+) serves as cofactor.

This chain is Probable alpha-L-glutamate ligase, found in Trichodesmium erythraeum (strain IMS101).